A 132-amino-acid chain; its full sequence is Histone H2B.2 (132 aa).

A compositionally biased stretch (basic and acidic residues) spans 1–19 (MAPKAEKKPASKAPAEKKP). Residues 1 to 39 (MAPKAEKKPASKAPAEKKPAAKKTSSSVDPSKKRTKARK) form a disordered region. 2 positions are modified to N6-acetyllysine; alternate: Lys7 and Lys8. Glycyl lysine isopeptide (Lys-Gly) (interchain with G-Cter in SUMO); alternate cross-links involve residues Lys7 and Lys8. At Ser11 the chain carries Phosphoserine. Residue Lys12 is modified to N6-acetyllysine. Lys17 is modified (N6-acetyllysine; alternate). Lys17 is covalently cross-linked (Glycyl lysine isopeptide (Lys-Gly) (interchain with G-Cter in SUMO); alternate). A Glycyl lysine isopeptide (Lys-Gly) (interchain with G-Cter in SUMO) cross-link involves residue Lys18. A Glycyl lysine isopeptide (Lys-Gly) (interchain with G-Cter in ubiquitin) cross-link involves residue Lys125.

This sequence belongs to the histone H2B family. The nucleosome is a histone octamer containing two molecules each of H2A, H2B, H3 and H4 assembled in one H3-H4 heterotetramer and two H2A-H2B heterodimers. The octamer wraps approximately 147 bp of DNA. Post-translationally, monoubiquitinated by the UBC2-BRE1 complex to form H2BK123ub1. H2BK123ub1 gives a specific tag for epigenetic transcriptional activation and is also prerequisite for H3K4me and H3K79me formation. H2BK123ub1 also modulates the formation of double-strand breaks during meiosis and is a prerequisite for DNA-damage checkpoint activation. Phosphorylated by STE20 to form H2BS10ph during progression through meiotic prophase. May be correlated with chromosome condensation. In terms of processing, acetylated by GCN5 to form H2BK11ac and H2BK16ac. H2BK16ac can also be formed by ESA1. Acetylation of N-terminal lysines and particularly formation of H2BK11acK16ac has a positive effect on transcription. Post-translationally, sumoylation to form H2BK6su or H2BK7su, and probably also H2BK16su or H2BK17su, occurs preferentially near the telomeres and represses gene transcription.

It localises to the nucleus. The protein resides in the chromosome. Its function is as follows. Core component of nucleosome. Nucleosomes wrap and compact DNA into chromatin, limiting DNA accessibility to the cellular machineries which require DNA as a template. Histones thereby play a central role in transcription regulation, DNA repair, DNA replication and chromosomal stability. DNA accessibility is regulated via a complex set of post-translational modifications of histones, also called histone code, and nucleosome remodeling. The sequence is that of Histone H2B.2 (HTB1) from Kluyveromyces lactis (strain ATCC 8585 / CBS 2359 / DSM 70799 / NBRC 1267 / NRRL Y-1140 / WM37) (Yeast).